Here is a 282-residue protein sequence, read N- to C-terminus: MDGKAVAAAVKERVKMAVAELKSGGTDPCLATVLVGDDPASGTYVRNKHAACAEVGITTQDHRLGPSTTEGDLLKLIAELNSDRSVHGILVQMPLPEGIREIKVVSAISPLKDVDGLTPLNAGLLTAGTATLIPCTPLGIMEMLDYYNIELEGKEVVLINRSRLVGIPLHHLFLGRNATVTTCHSRTKDIGSISRRADVIVTAVGNRDKFVLTPDMVKEGAVVIDVAISRSDRGLTGDADYAAVSEKASHITPVPGGVGPMTVAMLLKNTTTAASLVKSLER.

NADP(+)-binding positions include 160 to 162, Ser-185, and Ile-228; that span reads NRS.

It belongs to the tetrahydrofolate dehydrogenase/cyclohydrolase family. As to quaternary structure, homodimer.

It catalyses the reaction (6R)-5,10-methylene-5,6,7,8-tetrahydrofolate + NADP(+) = (6R)-5,10-methenyltetrahydrofolate + NADPH. The catalysed reaction is (6R)-5,10-methenyltetrahydrofolate + H2O = (6R)-10-formyltetrahydrofolate + H(+). Its pathway is one-carbon metabolism; tetrahydrofolate interconversion. In terms of biological role, catalyzes the oxidation of 5,10-methylenetetrahydrofolate to 5,10-methenyltetrahydrofolate and then the hydrolysis of 5,10-methenyltetrahydrofolate to 10-formyltetrahydrofolate. This chain is Bifunctional protein FolD, found in Cenarchaeum symbiosum (strain A).